We begin with the raw amino-acid sequence, 71 residues long: Defensin 1 (71 aa).

An N-terminal signal peptide occupies residues 1–25 (KTVAGFCIFFLVLFLAQEGVVKTEA). Disulfide bonds link C28–C71, C39–C60, and C45–C65.

The protein belongs to the DEFL family. In terms of assembly, may form dimers. In terms of processing, not glycosylated. Contains 4 disulfide bonds. Post-translationally, met-61 and Met-63 might be oxidized in some molecules.

Probably has antifungal activity. In Arachis hypogaea (Peanut), this protein is Defensin 1.